We begin with the raw amino-acid sequence, 375 residues long: Fructose-1,6-bisphosphate aldolase/phosphatase (375 aa).

The active-site Proton acceptor; for FBP phosphatase activity is the Asp15. Asp15, His22, Asp56, and Asp57 together coordinate Mg(2+). His22 is a binding site for beta-D-fructose 1,6-bisphosphate. His22 lines the dihydroxyacetone phosphate pocket. Tyr94 is a binding site for beta-D-fructose 1,6-bisphosphate. Mg(2+) is bound at residue Gln98. A beta-D-fructose 1,6-bisphosphate-binding site is contributed by 107–108 (GN). Mg(2+) is bound at residue Asp135. Position 136 (Lys136) interacts with beta-D-fructose 1,6-bisphosphate. Dihydroxyacetone phosphate is bound at residue Lys136. The active-site Proton donor/acceptor; for FBP aldolase activity is Tyr237. Mg(2+) contacts are provided by Lys240, Asp241, and Asp242. Lys240 acts as the Schiff-base intermediate with DHAP; for FBP aldolase activity in catalysis. Beta-D-fructose 1,6-bisphosphate contacts are provided by residues 250–251 (QS), Arg274, Asp295, and Tyr357. 2 residues coordinate dihydroxyacetone phosphate: Arg274 and Asp295.

It belongs to the FBP aldolase/phosphatase family. In terms of assembly, homooctamer; dimer of tetramers. Requires Mg(2+) as cofactor.

It carries out the reaction beta-D-fructose 1,6-bisphosphate + H2O = beta-D-fructose 6-phosphate + phosphate. It catalyses the reaction beta-D-fructose 1,6-bisphosphate = D-glyceraldehyde 3-phosphate + dihydroxyacetone phosphate. Its pathway is carbohydrate biosynthesis; gluconeogenesis. Activity is enhanced by dithioerythritol, and is slightly inhibited by fructose 2,6-bisphosphate. AMP does not inhibit the enzyme activity. Catalyzes two subsequent steps in gluconeogenesis: the aldol condensation of dihydroxyacetone phosphate (DHAP) and glyceraldehyde-3-phosphate (GA3P) to fructose-1,6-bisphosphate (FBP), and the dephosphorylation of FBP to fructose-6-phosphate (F6P). Does not display hydrolase activity against fructose 2,6-bisphosphate, fructose 6-phosphate, fructose 1-phosphate, glucose 6-phosphate, and glucose 1-phosphate. Exhibits only negligible activity on inositol-1-phosphate (IMP). Is essential for the growth of T.kodakaraensis under gluconeogenic conditions. In Thermococcus kodakarensis (strain ATCC BAA-918 / JCM 12380 / KOD1) (Pyrococcus kodakaraensis (strain KOD1)), this protein is Fructose-1,6-bisphosphate aldolase/phosphatase.